The chain runs to 376 residues: NAD-capped RNA hydrolase (376 aa).

The Zn(2+) site is built by Cys182, Cys185, Cys200, and Cys211. Substrate-binding positions include Tyr222, 258-260 (AGF), Glu274, Glu278, and Glu321. A Nudix hydrolase domain is found at 223–351 (PRTDPCVIMV…KDGPAPILFP (129 aa)). The Mg(2+) site is built by Ala258, Glu274, Glu278, and Glu321. The Nudix box motif lies at 259-280 (GFLEPGESLEEAVVRETYEESG). The short motif at 374–376 (VKM) is the Microbody targeting signal element.

This sequence belongs to the Nudix hydrolase family. NudC subfamily. In terms of assembly, homodimer. Mg(2+) is required as a cofactor. The cofactor is Zn(2+).

The enzyme catalyses a 5'-end NAD(+)-phospho-ribonucleoside in mRNA + H2O = a 5'-end phospho-adenosine-phospho-ribonucleoside in mRNA + beta-nicotinamide D-ribonucleotide + 2 H(+). It carries out the reaction NAD(+) + H2O = beta-nicotinamide D-ribonucleotide + AMP + 2 H(+). It catalyses the reaction NADH + H2O = reduced beta-nicotinamide D-ribonucleotide + AMP + 2 H(+). In terms of biological role, mRNA decapping enzyme that specifically removes the nicotinamide adenine dinucleotide (NAD) cap from a subset of mRNAs by hydrolyzing the diphosphate linkage to produce nicotinamide mononucleotide (NMN) and 5' monophosphate mRNA. The NAD-cap is present at the 5'-end of some RNAs; in contrast to the canonical N7 methylguanosine (m7G) cap, the NAD cap promotes mRNA decay. Mediates the hydrolysis of some nucleoside diphosphate derivatives. The polypeptide is NAD-capped RNA hydrolase (Schizosaccharomyces pombe (strain 972 / ATCC 24843) (Fission yeast)).